Consider the following 97-residue polypeptide: Large ribosomal subunit protein uL23 (97 aa).

This sequence belongs to the universal ribosomal protein uL23 family. Part of the 50S ribosomal subunit. Contacts protein L29, and trigger factor when it is bound to the ribosome.

Functionally, one of the early assembly proteins it binds 23S rRNA. One of the proteins that surrounds the polypeptide exit tunnel on the outside of the ribosome. Forms the main docking site for trigger factor binding to the ribosome. The polypeptide is Large ribosomal subunit protein uL23 (Allorhizobium ampelinum (strain ATCC BAA-846 / DSM 112012 / S4) (Agrobacterium vitis (strain S4))).